We begin with the raw amino-acid sequence, 518 residues long: 3-octaprenyl-4-hydroxybenzoate carboxy-lyase (518 aa).

Residue Asn177 participates in Mn(2+) binding. Prenylated FMN-binding positions include 180-182, 194-196, and 199-200; these read IYR, RWL, and RG. Residue Glu243 participates in Mn(2+) binding. Catalysis depends on Asp318, which acts as the Proton donor.

This sequence belongs to the UbiD family. Homohexamer. Requires prenylated FMN as cofactor. It depends on Mn(2+) as a cofactor.

The protein resides in the cell membrane. It carries out the reaction a 4-hydroxy-3-(all-trans-polyprenyl)benzoate + H(+) = a 2-(all-trans-polyprenyl)phenol + CO2. It participates in cofactor biosynthesis; ubiquinone biosynthesis. In terms of biological role, catalyzes the decarboxylation of 3-octaprenyl-4-hydroxy benzoate to 2-octaprenylphenol, an intermediate step in ubiquinone biosynthesis. This Burkholderia lata (strain ATCC 17760 / DSM 23089 / LMG 22485 / NCIMB 9086 / R18194 / 383) protein is 3-octaprenyl-4-hydroxybenzoate carboxy-lyase.